Here is a 524-residue protein sequence, read N- to C-terminus: Peptide chain release factor 3 (524 aa).

In terms of domain architecture, tr-type G spans 9–275; sequence QRRRTFAIIS…AVVELSPPPL (267 aa). GTP contacts are provided by residues 18–25, 86–90, and 140–143; these read SHPDAGKT, DTPGH, and NKLD.

This sequence belongs to the TRAFAC class translation factor GTPase superfamily. Classic translation factor GTPase family. PrfC subfamily.

The protein localises to the cytoplasm. Its function is as follows. Increases the formation of ribosomal termination complexes and stimulates activities of RF-1 and RF-2. It binds guanine nucleotides and has strong preference for UGA stop codons. It may interact directly with the ribosome. The stimulation of RF-1 and RF-2 is significantly reduced by GTP and GDP, but not by GMP. This is Peptide chain release factor 3 from Methylobacillus flagellatus (strain ATCC 51484 / DSM 6875 / VKM B-1610 / KT).